A 354-amino-acid chain; its full sequence is Heat-inducible transcription repressor HrcA (354 aa).

This sequence belongs to the HrcA family.

Its function is as follows. Negative regulator of class I heat shock genes (grpE-dnaK-dnaJ and groELS operons). Prevents heat-shock induction of these operons. The chain is Heat-inducible transcription repressor HrcA from Novosphingobium aromaticivorans (strain ATCC 700278 / DSM 12444 / CCUG 56034 / CIP 105152 / NBRC 16084 / F199).